The primary structure comprises 306 residues: ATP synthase gamma chain (306 aa).

It belongs to the ATPase gamma chain family. F-type ATPases have 2 components, CF(1) - the catalytic core - and CF(0) - the membrane proton channel. CF(1) has five subunits: alpha(3), beta(3), gamma(1), delta(1), epsilon(1). CF(0) has three main subunits: a, b and c.

The protein localises to the cell membrane. In terms of biological role, produces ATP from ADP in the presence of a proton gradient across the membrane. The gamma chain is believed to be important in regulating ATPase activity and the flow of protons through the CF(0) complex. This chain is ATP synthase gamma chain, found in Bifidobacterium adolescentis (strain ATCC 15703 / DSM 20083 / NCTC 11814 / E194a).